Consider the following 188-residue polypeptide: MSDENKPGEAAELDAGVAPEAQPETELTVEELIIRLEAEKADMNGQILRLLADLDNTRKRADRQVSEARIYAIEKFAADLLSVSDNLSRALDALPDSERENLTDAGKNLLGGIEMTAKELNTALSRHGVVPVPAEPGAVFDPNVHQAVAQIPSPQPSGTIAQLFQPGWKIGDRTLRAAMVAVSTGPAN.

A disordered region spans residues 1-24; sequence MSDENKPGEAAELDAGVAPEAQPE.

The protein belongs to the GrpE family. Homodimer.

The protein resides in the cytoplasm. In terms of biological role, participates actively in the response to hyperosmotic and heat shock by preventing the aggregation of stress-denatured proteins, in association with DnaK and GrpE. It is the nucleotide exchange factor for DnaK and may function as a thermosensor. Unfolded proteins bind initially to DnaJ; upon interaction with the DnaJ-bound protein, DnaK hydrolyzes its bound ATP, resulting in the formation of a stable complex. GrpE releases ADP from DnaK; ATP binding to DnaK triggers the release of the substrate protein, thus completing the reaction cycle. Several rounds of ATP-dependent interactions between DnaJ, DnaK and GrpE are required for fully efficient folding. This Hyphomonas neptunium (strain ATCC 15444) protein is Protein GrpE.